The chain runs to 1013 residues: GTPase-activating Rap/Ran-GAP domain-like protein 3 (1013 aa).

Ser45 carries the post-translational modification Phosphoserine. The Rap-GAP domain maps to 191-407; the sequence is LLVLEEQEGS…RTLDMLIRSL (217 aa). Phosphoserine occurs at positions 426 and 432. The CNH domain occupies 489–800; it reads PHEAVCADPW…QLVASRSDIY (312 aa). Disordered regions lie at residues 810-842 and 913-1013; these read VSSGGSSKGASARNSPQTPPGRDTPVFPSSLGE and LLGL…IDLK. Residues 811–821 are compositionally biased toward low complexity; it reads SSGGSSKGASA. Residue Thr827 is modified to Phosphothreonine. Residues 952-962 are compositionally biased toward low complexity; the sequence is SSSSDRIPSGS. Polar residues-rich tracts occupy residues 963–982 and 993–1003; these read LESASTSEANPEGHSASSDQ and VSGSSPFQLTA.

It belongs to the GARNL3 family.

The protein is GTPase-activating Rap/Ran-GAP domain-like protein 3 (GARNL3) of Homo sapiens (Human).